A 67-amino-acid chain; its full sequence is Large ribosomal subunit protein uL29 (67 aa).

Belongs to the universal ribosomal protein uL29 family.

In Moorella thermoacetica (strain ATCC 39073 / JCM 9320), this protein is Large ribosomal subunit protein uL29.